The following is a 278-amino-acid chain: Urease accessory protein UreD (278 aa).

Belongs to the UreD family. UreD, UreF and UreG form a complex that acts as a GTP-hydrolysis-dependent molecular chaperone, activating the urease apoprotein by helping to assemble the nickel containing metallocenter of UreC. The UreE protein probably delivers the nickel.

The protein resides in the cytoplasm. Functionally, required for maturation of urease via the functional incorporation of the urease nickel metallocenter. In Staphylococcus epidermidis (strain ATCC 12228 / FDA PCI 1200), this protein is Urease accessory protein UreD.